The primary structure comprises 310 residues: Phosphoribosylaminoimidazole-succinocarboxamide synthase (310 aa).

It belongs to the SAICAR synthetase family.

It catalyses the reaction 5-amino-1-(5-phospho-D-ribosyl)imidazole-4-carboxylate + L-aspartate + ATP = (2S)-2-[5-amino-1-(5-phospho-beta-D-ribosyl)imidazole-4-carboxamido]succinate + ADP + phosphate + 2 H(+). Its pathway is purine metabolism; IMP biosynthesis via de novo pathway; 5-amino-1-(5-phospho-D-ribosyl)imidazole-4-carboxamide from 5-amino-1-(5-phospho-D-ribosyl)imidazole-4-carboxylate: step 1/2. This Stenotrophomonas maltophilia (strain K279a) protein is Phosphoribosylaminoimidazole-succinocarboxamide synthase.